The sequence spans 790 residues: Choline transporter-like 2 (790 aa).

The helical transmembrane segment at 47 to 67 (PCLFLFVTFLCAWGYVAYYAV) threads the bilayer. 2 N-linked (GlcNAc...) asparagine glycosylation sites follow: N102 and N259. The next 3 membrane-spanning stretches (helical) occupy residues 288 to 308 (IITPYLITIHNITVLLTFQMI), 319 to 339 (ILVFIACSVLASLILIAMLRW), and 344 to 364 (LVWISIIGVITALSYGVYYSF). A glycan (N-linked (GlcNAc...) asparagine) is linked at N384. The next 2 helical transmembrane spans lie at 400–420 (LWILIALSVILIVLLLVVLVL) and 449–469 (LVPWILQAVVIVFSLLVLLFL). N-linked (GlcNAc...) asparagine glycosylation is present at N483. Helical transmembrane passes span 545-565 (VIGFFWCICFVSAFSEMVLAF), 592-612 (VYYHLGTLAFGSLIIAICKII), 691-711 (VTGFLFFLSKLLLASGMAAVT), and 728-748 (FVPAVLVFIGTFIIASIFFSV).

The protein belongs to the CTL (choline transporter-like) family.

The protein resides in the membrane. In Anopheles gambiae (African malaria mosquito), this protein is Choline transporter-like 2.